The following is a 425-amino-acid chain: F-box/LRR-repeat protein At3g59250 (425 aa).

The 49-residue stretch at 6–54 (KDKISNLPEALICHILSFLPIEDSALTSVLSKRWRYLFAFRPNLVFDDS) folds into the F-box domain. LRR repeat units lie at residues 86–113 (DLQV…RIES), 138–163 (MLGK…VLNN), 185–210 (CTES…KYSD), 264–293 (CLSA…TIKT), and 294–319 (NQSV…VFEG).

The sequence is that of F-box/LRR-repeat protein At3g59250 from Arabidopsis thaliana (Mouse-ear cress).